Here is a 313-residue protein sequence, read N- to C-terminus: Protoheme IX farnesyltransferase (313 aa).

Helical transmembrane passes span 35 to 55 (LVVF…HPVL), 56 to 76 (AATS…LNMW), 98 to 118 (VSSP…VATL), 120 to 140 (VLVN…YAVV), 153 to 173 (IVIG…AATG), 180 to 200 (IILF…LALF), 226 to 246 (ILLY…LGYF), 248 to 268 (AAYG…AFNV), and 292 to 312 (LFLL…AAMI).

The protein belongs to the UbiA prenyltransferase family. Protoheme IX farnesyltransferase subfamily.

It is found in the cell inner membrane. It catalyses the reaction heme b + (2E,6E)-farnesyl diphosphate + H2O = Fe(II)-heme o + diphosphate. Its pathway is porphyrin-containing compound metabolism; heme O biosynthesis; heme O from protoheme: step 1/1. Converts heme B (protoheme IX) to heme O by substitution of the vinyl group on carbon 2 of heme B porphyrin ring with a hydroxyethyl farnesyl side group. The polypeptide is Protoheme IX farnesyltransferase (Afipia carboxidovorans (strain ATCC 49405 / DSM 1227 / KCTC 32145 / OM5) (Oligotropha carboxidovorans)).